The primary structure comprises 67 residues: Beta-defensin 110 (67 aa).

Positions 1 to 19 (MKIQLFFFILLFWVTILPA) are cleaved as a signal peptide. Cystine bridges form between Cys-35-Cys-63, Cys-42-Cys-56, and Cys-46-Cys-64.

Belongs to the beta-defensin family.

It localises to the secreted. In terms of biological role, has antibacterial activity. In Pan troglodytes (Chimpanzee), this protein is Beta-defensin 110 (DEFB110).